We begin with the raw amino-acid sequence, 381 residues long: Chaperone protein DnaJ (381 aa).

Residues 5-70 form the J domain; the sequence is DFYEVLGVGR…QKKAAYDQYG (66 aa). The segment at 136–214 adopts a CR-type zinc-finger fold; it reads GVSKEIEVPT…CHGQGRKQKT (79 aa). Zn(2+) contacts are provided by cysteine 149, cysteine 152, cysteine 166, cysteine 169, cysteine 188, cysteine 191, cysteine 202, and cysteine 205. 4 CXXCXGXG motif repeats span residues 149–156, 166–173, 188–195, and 202–209; these read CDTCDGSG, CGTCHGHG, CPTCHGKG, and CNECHGQG.

This sequence belongs to the DnaJ family. As to quaternary structure, homodimer. Zn(2+) is required as a cofactor.

It is found in the cytoplasm. Its function is as follows. Participates actively in the response to hyperosmotic and heat shock by preventing the aggregation of stress-denatured proteins and by disaggregating proteins, also in an autonomous, DnaK-independent fashion. Unfolded proteins bind initially to DnaJ; upon interaction with the DnaJ-bound protein, DnaK hydrolyzes its bound ATP, resulting in the formation of a stable complex. GrpE releases ADP from DnaK; ATP binding to DnaK triggers the release of the substrate protein, thus completing the reaction cycle. Several rounds of ATP-dependent interactions between DnaJ, DnaK and GrpE are required for fully efficient folding. Also involved, together with DnaK and GrpE, in the DNA replication of plasmids through activation of initiation proteins. The polypeptide is Chaperone protein DnaJ (Vibrio campbellii (strain ATCC BAA-1116)).